The chain runs to 102 residues: Glutaredoxin (102 aa).

The Glutaredoxin domain maps to 3–102 (MTKTKELVSS…VPLLTEAGAV (100 aa)). Residues cysteine 23 and cysteine 26 are joined by a disulfide bond.

This sequence belongs to the glutaredoxin family. CPYC subfamily.

The protein resides in the cytoplasm. Its function is as follows. Has a glutathione-disulfide oxidoreductase activity in the presence of NADPH and glutathione reductase. Reduces low molecular weight disulfides and proteins. The protein is Glutaredoxin of Ricinus communis (Castor bean).